A 201-amino-acid chain; its full sequence is uncharacterized protein (201 aa).

The segment at 53-74 (PKKNTAHKNSTTSTVASSGNTT) is disordered. A compositionally biased stretch (polar residues) spans 59–74 (HKNSTTSTVASSGNTT). The bHLH domain occupies 88–136 (AKRLSHKEVERRRREAISEGIKELANIVPGCEKNKGSILQRTAQYIRSL).

The protein resides in the nucleus. This is an uncharacterized protein from Schizosaccharomyces pombe (strain 972 / ATCC 24843) (Fission yeast).